Consider the following 261-residue polypeptide: Fructoselysine 6-kinase (261 aa).

Belongs to the carbohydrate kinase PfkB family. In terms of assembly, monomer.

It carries out the reaction N(6)-(D-fructosyl)-L-lysine + ATP = N(6)-(6-phospho-D-fructosyl)-L-lysine + ADP + H(+). The protein operates within carbohydrate metabolism; fructoselysine degradation; D-glucose 6-phosphate and lysine from fructoselysine: step 1/2. Functionally, catalyzes the ATP-dependent phosphorylation of fructoselysine to fructoselysine 6-phosphate. May function in a fructoselysine degradation pathway that allows S.flexneri to grow on fructoselysine or psicoselysine. The protein is Fructoselysine 6-kinase (frlD) of Shigella flexneri.